The following is a 302-amino-acid chain: tRNA pseudouridine synthase B (302 aa).

Catalysis depends on Asp-45, which acts as the Nucleophile.

Belongs to the pseudouridine synthase TruB family. Type 1 subfamily.

It carries out the reaction uridine(55) in tRNA = pseudouridine(55) in tRNA. Its function is as follows. Responsible for synthesis of pseudouridine from uracil-55 in the psi GC loop of transfer RNAs. This chain is tRNA pseudouridine synthase B, found in Francisella tularensis subsp. tularensis (strain WY96-3418).